A 409-amino-acid chain; its full sequence is Tryptophan synthase beta chain (409 aa).

The residue at position 104 (Lys104) is an N6-(pyridoxal phosphate)lysine.

It belongs to the TrpB family. As to quaternary structure, tetramer of two alpha and two beta chains. Pyridoxal 5'-phosphate is required as a cofactor.

It catalyses the reaction (1S,2R)-1-C-(indol-3-yl)glycerol 3-phosphate + L-serine = D-glyceraldehyde 3-phosphate + L-tryptophan + H2O. It functions in the pathway amino-acid biosynthesis; L-tryptophan biosynthesis; L-tryptophan from chorismate: step 5/5. In terms of biological role, the beta subunit is responsible for the synthesis of L-tryptophan from indole and L-serine. This Trichodesmium erythraeum (strain IMS101) protein is Tryptophan synthase beta chain.